We begin with the raw amino-acid sequence, 295 residues long: Protoheme IX farnesyltransferase (295 aa).

The next 9 membrane-spanning stretches (helical) occupy residues 8-28, 35-55, 74-94, 106-125, 132-152, 162-182, 208-228, 233-253, and 264-284; these read VTKP…FLLA, YPLF…GCVF, VLVK…LLGI, PLAM…VYSL, VYGT…GYCA, LILL…IAIF, ITLY…GGYA, LVVA…GYKA, and FVFS…DFMV.

Belongs to the UbiA prenyltransferase family. Protoheme IX farnesyltransferase subfamily.

Its subcellular location is the cell inner membrane. The enzyme catalyses heme b + (2E,6E)-farnesyl diphosphate + H2O = Fe(II)-heme o + diphosphate. The protein operates within porphyrin-containing compound metabolism; heme O biosynthesis; heme O from protoheme: step 1/1. In terms of biological role, converts heme B (protoheme IX) to heme O by substitution of the vinyl group on carbon 2 of heme B porphyrin ring with a hydroxyethyl farnesyl side group. The sequence is that of Protoheme IX farnesyltransferase from Cronobacter sakazakii (strain ATCC BAA-894) (Enterobacter sakazakii).